The following is a 115-amino-acid chain: NAD(P)H-quinone oxidoreductase subunit M (115 aa).

The protein belongs to the complex I NdhM subunit family. In terms of assembly, NDH-1 can be composed of about 15 different subunits; different subcomplexes with different compositions have been identified which probably have different functions.

It localises to the cellular thylakoid membrane. The enzyme catalyses a plastoquinone + NADH + (n+1) H(+)(in) = a plastoquinol + NAD(+) + n H(+)(out). It catalyses the reaction a plastoquinone + NADPH + (n+1) H(+)(in) = a plastoquinol + NADP(+) + n H(+)(out). Functionally, NDH-1 shuttles electrons from an unknown electron donor, via FMN and iron-sulfur (Fe-S) centers, to quinones in the respiratory and/or the photosynthetic chain. The immediate electron acceptor for the enzyme in this species is believed to be plastoquinone. Couples the redox reaction to proton translocation, and thus conserves the redox energy in a proton gradient. Cyanobacterial NDH-1 also plays a role in inorganic carbon-concentration. The chain is NAD(P)H-quinone oxidoreductase subunit M from Prochlorococcus marinus (strain SARG / CCMP1375 / SS120).